The sequence spans 533 residues: Beta-glucosidase 22 (533 aa).

The N-terminal stretch at 1–24 is a signal peptide; that stretch reads MAVSSSTSTCSSFSLLLLLLLLAA. Asn41 is a glycosylation site (N-linked (GlcNAc...) asparagine). A beta-D-glucoside is bound by residues Gln61, His161, and 206–207; that span reads DE. Glu207 serves as the catalytic Proton donor. Cys226 and Cys234 are joined by a disulfide. Asn233 and Asn238 each carry an N-linked (GlcNAc...) asparagine glycan. Positions 350 and 421 each coordinate a beta-D-glucoside. Catalysis depends on Glu421, which acts as the Nucleophile. Asn435 carries N-linked (GlcNAc...) asparagine glycosylation. A beta-D-glucoside-binding residues include Trp466 and Phe482.

This sequence belongs to the glycosyl hydrolase 1 family.

It catalyses the reaction Hydrolysis of terminal, non-reducing beta-D-glucosyl residues with release of beta-D-glucose.. The polypeptide is Beta-glucosidase 22 (BGLU22) (Oryza sativa subsp. japonica (Rice)).